The primary structure comprises 290 residues: Zinc finger AN1 and C2H2 domain-containing stress-associated protein 16 (290 aa).

2 AN1-type zinc fingers span residues 7–55 and 95–145; these read PNLG…QKDV and VTKK…KPES. The Zn(2+) site is built by C13, C18, C28, C31, C36, H39, H45, C47, C101, C106, C118, C121, C126, H129, H135, and C137. 2 consecutive C2H2-type zinc fingers follow at residues 224 to 247 and 261 to 284; these read EQCVQCPARFSTVGALIEHCEKSH and DVCPKCSKAFRDPVLLVEHVERDH.

Its function is as follows. May be involved in environmental stress response. The polypeptide is Zinc finger AN1 and C2H2 domain-containing stress-associated protein 16 (SAP16) (Oryza sativa subsp. japonica (Rice)).